Reading from the N-terminus, the 527-residue chain is Putative BTB/POZ domain and WD-repeat protein R783 (527 aa).

One can recognise a BTB domain in the interval 45–115 (TDVTIVLDDG…FYSQNTDTRN (71 aa)). 5 WD repeats span residues 215–266 (IHGD…VEAS), 272–310 (NVKTRFEHFCYLPSNNHLISTSSYNIYVWDLSTNKLIKT), 313–353 (KHKN…IVRC), 355–391 (ISPVDCICYSSSGRELVIVNKHYIKVFNVSDGTFLFK), and 436–476 (YCPS…DNKY).

It belongs to the mimivirus BTB/WD family.

This Acanthamoeba polyphaga (Amoeba) protein is Putative BTB/POZ domain and WD-repeat protein R783.